The chain runs to 416 residues: 2-aminoadipate transaminase (416 aa).

Pyridoxal 5'-phosphate-binding positions include glycine 102–alanine 103 and glutamine 233. At lysine 259 the chain carries N6-(pyridoxal phosphate)lysine. Threonine 288 serves as a coordination point for pyridoxal 5'-phosphate.

This sequence belongs to the class-III pyridoxal-phosphate-dependent aminotransferase family. It depends on pyridoxal 5'-phosphate as a cofactor.

The enzyme catalyses L-2-aminoadipate + 2-oxoglutarate = 2-oxoadipate + L-glutamate. It carries out the reaction 5-aminopentanoate + 2-oxoglutarate = 5-oxopentanoate + L-glutamate. The protein operates within amino-acid degradation. Functionally, catalyzes the conversion of 2-aminoadipate (2AA) to 2-oxoadipate (2OA). Is most active on L-2-aminoadipate (L-2AA) and shows only weak activity on the enantiomer, D-2-aminoadipate (D-2AA). Shows moderate activity on 5-aminovalerate (5AVA) and weak activity toward 4-aminobutyrate (GABA). Is involved in a D-lysine catabolic pathway. In Pseudomonas putida (strain ATCC 47054 / DSM 6125 / CFBP 8728 / NCIMB 11950 / KT2440), this protein is 2-aminoadipate transaminase.